The following is a 333-amino-acid chain: Acetoin:2,6-dichlorophenolindophenol oxidoreductase subunit alpha (333 aa).

In terms of assembly, tetramer of 2 alpha and 2 beta subunits. Thiamine diphosphate serves as cofactor.

Its pathway is ketone degradation; acetoin degradation. Functionally, catalyzes the 2,6-dichlorophenolindophenol-dependent cleavage of acetoin into acetate and acetaldehyde. The alpha subunit is probably the catalytic subunit of the enzyme. The sequence is that of Acetoin:2,6-dichlorophenolindophenol oxidoreductase subunit alpha (acoA) from Bacillus subtilis (strain 168).